A 262-amino-acid chain; its full sequence is Phosphatidylglycerol--prolipoprotein diacylglyceryl transferase (262 aa).

The next 4 membrane-spanning stretches (helical) occupy residues 9–29, 41–61, 80–100, and 109–129; these read LGPLAIRWYALCIVTGLILAV, IIPDDILDFILVAFPLAILGA, IFAIWNGGLAIYGGLITGALV, and LINTWDFLDIAAPSVMIAQSL. An a 1,2-diacyl-sn-glycero-3-phospho-(1'-sn-glycerol)-binding site is contributed by Arg131. A run of 3 helical transmembrane segments spans residues 167–187, 197–217, and 227–247; these read QPTFLYESLWNLLGFALILIF, GHITAFYLIWYGFGRMVIEGM, and LRVSQWLSVVLIGLGIMIVIY.

Belongs to the Lgt family.

The protein localises to the cell membrane. The enzyme catalyses L-cysteinyl-[prolipoprotein] + a 1,2-diacyl-sn-glycero-3-phospho-(1'-sn-glycerol) = an S-1,2-diacyl-sn-glyceryl-L-cysteinyl-[prolipoprotein] + sn-glycerol 1-phosphate + H(+). Its pathway is protein modification; lipoprotein biosynthesis (diacylglyceryl transfer). Its function is as follows. Catalyzes the transfer of the diacylglyceryl group from phosphatidylglycerol to the sulfhydryl group of the N-terminal cysteine of a prolipoprotein, the first step in the formation of mature lipoproteins. The protein is Phosphatidylglycerol--prolipoprotein diacylglyceryl transferase of Streptococcus pneumoniae (strain JJA).